The sequence spans 321 residues: Translation initiation factor eIF2B subunit alpha (321 aa).

The protein belongs to the eIF-2B alpha/beta/delta subunits family. As to quaternary structure, component of the translation initiation factor 2B (eIF2B) complex which is a heterodecamer of two sets of five different subunits: alpha, beta, gamma, delta and epsilon. Subunits alpha, beta and delta comprise a regulatory subcomplex and subunits epsilon and gamma comprise a catalytic subcomplex. Within the complex, the hexameric regulatory complex resides at the center, with the two heterodimeric catalytic subcomplexes bound on opposite sides.

It is found in the cytoplasm. The protein resides in the cytosol. Functionally, acts as a component of the translation initiation factor 2B (eIF2B) complex, which catalyzes the exchange of GDP for GTP on eukaryotic initiation factor 2 (eIF2) gamma subunit. Its guanine nucleotide exchange factor activity is repressed when bound to eIF2 complex phosphorylated on the alpha subunit, thereby limiting the amount of methionyl-initiator methionine tRNA available to the ribosome and consequently global translation is repressed. In Dictyostelium discoideum (Social amoeba), this protein is Translation initiation factor eIF2B subunit alpha (eif2b1).